A 266-amino-acid polypeptide reads, in one-letter code: Small ribosomal subunit protein eS1 (266 aa).

The interval 234–266 is disordered; it reads EGGTGTATKATGDDTGAKVERADGYEPPIQETV. Residues 244–257 show a composition bias toward basic and acidic residues; it reads TGDDTGAKVERADG.

Belongs to the eukaryotic ribosomal protein eS1 family. As to quaternary structure, component of the small ribosomal subunit. Mature ribosomes consist of a small (40S) and a large (60S) subunit. The 40S subunit contains about 33 different proteins and 1 molecule of RNA (18S). The 60S subunit contains about 49 different proteins and 3 molecules of RNA (28S, 5.8S and 5S). Part of the small subunit (SSU) processome, composed of more than 70 proteins and the RNA chaperone small nucleolar RNA (snoRNA) U3.

The protein resides in the cytoplasm. It is found in the nucleus. Its subcellular location is the nucleolus. Its function is as follows. Component of the small ribosomal subunit. The ribosome is a large ribonucleoprotein complex responsible for the synthesis of proteins in the cell. Part of the small subunit (SSU) processome, first precursor of the small eukaryotic ribosomal subunit. During the assembly of the SSU processome in the nucleolus, many ribosome biogenesis factors, an RNA chaperone and ribosomal proteins associate with the nascent pre-rRNA and work in concert to generate RNA folding, modifications, rearrangements and cleavage as well as targeted degradation of pre-ribosomal RNA by the RNA exosome. May play a role during erythropoiesis. The chain is Small ribosomal subunit protein eS1 (rps3a) from Solea senegalensis (Senegalese sole).